The following is a 409-amino-acid chain: NADH-quinone oxidoreductase subunit D (409 aa).

Belongs to the complex I 49 kDa subunit family. In terms of assembly, NDH-1 is composed of 14 different subunits. Subunits NuoB, C, D, E, F, and G constitute the peripheral sector of the complex.

The protein localises to the cell inner membrane. The enzyme catalyses a quinone + NADH + 5 H(+)(in) = a quinol + NAD(+) + 4 H(+)(out). In terms of biological role, NDH-1 shuttles electrons from NADH, via FMN and iron-sulfur (Fe-S) centers, to quinones in the respiratory chain. The immediate electron acceptor for the enzyme in this species is believed to be ubiquinone. Couples the redox reaction to proton translocation (for every two electrons transferred, four hydrogen ions are translocated across the cytoplasmic membrane), and thus conserves the redox energy in a proton gradient. The protein is NADH-quinone oxidoreductase subunit D of Campylobacter curvus (strain 525.92).